Here is a 56-residue protein sequence, read N- to C-terminus: Endoglucanase Cel5A (56 aa).

E45 acts as the Nucleophile in catalysis.

Belongs to the glycosyl hydrolase 5 (cellulase A) family.

It localises to the secreted. The protein resides in the extracellular space. It catalyses the reaction Endohydrolysis of (1-&gt;4)-beta-D-glucosidic linkages in cellulose, lichenin and cereal beta-D-glucans.. Its function is as follows. Has avicelase and carboxymethylcellulase activity. The protein is Endoglucanase Cel5A of Gloeophyllum trabeum (Brown rot fungus).